The primary structure comprises 92 residues: uncharacterized protein (92 aa).

The 59-residue stretch at leucine 25–valine 83 folds into the HTH cro/C1-type domain. A DNA-binding region (H-T-H motif) is located at residues arginine 36–arginine 55.

This is an uncharacterized protein from Rickettsia prowazekii (strain Madrid E).